Reading from the N-terminus, the 99-residue chain is Putative pterin-4-alpha-carbinolamine dehydratase (99 aa).

The protein belongs to the pterin-4-alpha-carbinolamine dehydratase family.

The catalysed reaction is (4aS,6R)-4a-hydroxy-L-erythro-5,6,7,8-tetrahydrobiopterin = (6R)-L-erythro-6,7-dihydrobiopterin + H2O. In Aquifex aeolicus (strain VF5), this protein is Putative pterin-4-alpha-carbinolamine dehydratase.